A 304-amino-acid chain; its full sequence is Pyridoxal 5'-phosphate synthase subunit PdxS (304 aa).

Aspartate 34 serves as a coordination point for D-ribose 5-phosphate. Lysine 91 (schiff-base intermediate with D-ribose 5-phosphate) is an active-site residue. Position 163 (glycine 163) interacts with D-ribose 5-phosphate. Arginine 175 is a D-glyceraldehyde 3-phosphate binding site. D-ribose 5-phosphate is bound by residues glycine 224 and 245-246 (GS).

This sequence belongs to the PdxS/SNZ family. In the presence of PdxT, forms a dodecamer of heterodimers.

The enzyme catalyses aldehydo-D-ribose 5-phosphate + D-glyceraldehyde 3-phosphate + L-glutamine = pyridoxal 5'-phosphate + L-glutamate + phosphate + 3 H2O + H(+). It functions in the pathway cofactor biosynthesis; pyridoxal 5'-phosphate biosynthesis. Functionally, catalyzes the formation of pyridoxal 5'-phosphate from ribose 5-phosphate (RBP), glyceraldehyde 3-phosphate (G3P) and ammonia. The ammonia is provided by the PdxT subunit. Can also use ribulose 5-phosphate and dihydroxyacetone phosphate as substrates, resulting from enzyme-catalyzed isomerization of RBP and G3P, respectively. The sequence is that of Pyridoxal 5'-phosphate synthase subunit PdxS from Streptomyces avermitilis (strain ATCC 31267 / DSM 46492 / JCM 5070 / NBRC 14893 / NCIMB 12804 / NRRL 8165 / MA-4680).